The sequence spans 285 residues: Kanamycin B dioxygenase (285 aa).

This sequence belongs to the PhyH family. Fe cation is required as a cofactor.

The enzyme catalyses kanamycin B + 2-oxoglutarate + O2 = 2'-dehydrokanamycin A + succinate + NH4(+) + CO2. Its pathway is antibiotic biosynthesis; kanamycin biosynthesis. In terms of biological role, mediates the conversion of kanamycin B into 2'-dehydrokanamycin A during the transformation of kanamycin B to kanamycin A. This chain is Kanamycin B dioxygenase (kanJ), found in Streptomyces kanamyceticus.